Here is a 63-residue protein sequence, read N- to C-terminus: Large ribosomal subunit protein bL28 (63 aa).

Residues 1-20 form a disordered region; the sequence is MSKRCAITGKGPMVGNNVSH.

The protein belongs to the bacterial ribosomal protein bL28 family.

In Campylobacter fetus subsp. fetus (strain 82-40), this protein is Large ribosomal subunit protein bL28.